We begin with the raw amino-acid sequence, 628 residues long: Isoleucine--tRNA ligase (628 aa).

Positions 505 to 509 match the 'KMSKS' region motif; that stretch reads KMSKR. ATP is bound at residue lysine 508.

This sequence belongs to the class-I aminoacyl-tRNA synthetase family.

It carries out the reaction tRNA(Ile) + L-isoleucine + ATP = L-isoleucyl-tRNA(Ile) + AMP + diphosphate. The sequence is that of Isoleucine--tRNA ligase from Antonospora locustae (Microsporidian parasite).